Consider the following 239-residue polypeptide: Proteasome activator complex subunit 2 (239 aa).

Ala2 is subject to N-acetylalanine. At Ser10 the chain carries Phosphoserine. Residues 65-87 (DIPIPDPPPKDDEMETDKQEKKE) form a disordered region. Residues 72–87 (PPKDDEMETDKQEKKE) show a composition bias toward basic and acidic residues.

Belongs to the PA28 family. In terms of assembly, heterodimer of PSME1 and PSME2, which forms a hexameric ring.

Implicated in immunoproteasome assembly and required for efficient antigen processing. The PA28 activator complex enhances the generation of class I binding peptides by altering the cleavage pattern of the proteasome. This Mus musculus (Mouse) protein is Proteasome activator complex subunit 2 (Psme2).